Consider the following 62-residue polypeptide: Large ribosomal subunit protein bL28 (62 aa).

The interval 1-27 is disordered; it reads MAKECVITGRKSRSGNKRSHAMNSSKR. The segment covering 10 to 20 has biased composition (basic residues); it reads RKSRSGNKRSH.

The protein belongs to the bacterial ribosomal protein bL28 family.

This is Large ribosomal subunit protein bL28 from Listeria innocua serovar 6a (strain ATCC BAA-680 / CLIP 11262).